Consider the following 252-residue polypeptide: 1-(5-phosphoribosyl)-5-[(5-phosphoribosylamino)methylideneamino] imidazole-4-carboxamide isomerase (252 aa).

The Proton acceptor role is filled by Asp8. Asp129 (proton donor) is an active-site residue.

The protein belongs to the HisA/HisF family.

It localises to the cytoplasm. It catalyses the reaction 1-(5-phospho-beta-D-ribosyl)-5-[(5-phospho-beta-D-ribosylamino)methylideneamino]imidazole-4-carboxamide = 5-[(5-phospho-1-deoxy-D-ribulos-1-ylimino)methylamino]-1-(5-phospho-beta-D-ribosyl)imidazole-4-carboxamide. It functions in the pathway amino-acid biosynthesis; L-histidine biosynthesis; L-histidine from 5-phospho-alpha-D-ribose 1-diphosphate: step 4/9. The sequence is that of 1-(5-phosphoribosyl)-5-[(5-phosphoribosylamino)methylideneamino] imidazole-4-carboxamide isomerase from Synechococcus sp. (strain RCC307).